We begin with the raw amino-acid sequence, 458 residues long: Argininosuccinate lyase (458 aa).

The protein belongs to the lyase 1 family. Argininosuccinate lyase subfamily.

The protein localises to the cytoplasm. It carries out the reaction 2-(N(omega)-L-arginino)succinate = fumarate + L-arginine. It functions in the pathway amino-acid biosynthesis; L-arginine biosynthesis; L-arginine from L-ornithine and carbamoyl phosphate: step 3/3. The chain is Argininosuccinate lyase from Buchnera aphidicola subsp. Baizongia pistaciae (strain Bp).